We begin with the raw amino-acid sequence, 110 residues long: Large ribosomal subunit protein uL22 (110 aa).

It belongs to the universal ribosomal protein uL22 family. As to quaternary structure, part of the 50S ribosomal subunit.

This protein binds specifically to 23S rRNA; its binding is stimulated by other ribosomal proteins, e.g. L4, L17, and L20. It is important during the early stages of 50S assembly. It makes multiple contacts with different domains of the 23S rRNA in the assembled 50S subunit and ribosome. Its function is as follows. The globular domain of the protein is located near the polypeptide exit tunnel on the outside of the subunit, while an extended beta-hairpin is found that lines the wall of the exit tunnel in the center of the 70S ribosome. This chain is Large ribosomal subunit protein uL22, found in Buchnera aphidicola subsp. Schizaphis graminum (strain Sg).